The following is a 286-amino-acid chain: 33 kDa chaperonin (286 aa).

2 cysteine pairs are disulfide-bonded: C236–C238 and C264–C267.

It belongs to the HSP33 family. In terms of processing, under oxidizing conditions two disulfide bonds are formed involving the reactive cysteines. Under reducing conditions zinc is bound to the reactive cysteines and the protein is inactive.

The protein localises to the cytoplasm. Its function is as follows. Redox regulated molecular chaperone. Protects both thermally unfolding and oxidatively damaged proteins from irreversible aggregation. Plays an important role in the bacterial defense system toward oxidative stress. This is 33 kDa chaperonin from Carboxydothermus hydrogenoformans (strain ATCC BAA-161 / DSM 6008 / Z-2901).